The primary structure comprises 683 residues: Dipeptidyl-peptidase 5 (683 aa).

An N-terminal signal peptide occupies residues 1–19 (MHSLFKQLVFFLVMTLTAA). N-linked (GlcNAc...) asparagine glycosylation is found at asparagine 53, asparagine 69, asparagine 103, asparagine 116, asparagine 126, and asparagine 400. Residues serine 535, aspartate 617, and histidine 649 each act as charge relay system in the active site.

The protein belongs to the peptidase S9C family.

Its subcellular location is the secreted. The protein resides in the cytoplasm. It localises to the nucleus. The sequence is that of Dipeptidyl-peptidase 5 from Schizosaccharomyces pombe (strain 972 / ATCC 24843) (Fission yeast).